An 852-amino-acid chain; its full sequence is Mannosyl-oligosaccharide glucosidase GCS1 (852 aa).

The tract at residues 1–31 (MTGASRRSARGRIKSSSLSPGSDEGSAYPPS) is disordered. Topologically, residues 1–51 (MTGASRRSARGRIKSSSLSPGSDEGSAYPPSIRRGKGKELVSIGAFKTNLK) are cytoplasmic. The Endoplasmic reticulum targeting motif lies at 6–12 (RRSARGR). Residues 15–26 (SSSLSPGSDEGS) show a composition bias toward low complexity. A helical; Signal-anchor for type II membrane protein membrane pass occupies residues 52-72 (ILVGLIILGIIVIYFVINRLV). Over 73-852 (RHGLLFDESQ…LIMSEDYPIF (780 aa)) the chain is Lumenal. The tract at residues 91 to 150 (PAPKVMDLSMFQGEHKESLYWGTYRPHVYFGVRARTPLSLVAGLMWLGVKDEMYVMRHFC) is required for endoplasmic reticulum targeting. N-linked (GlcNAc...) asparagine glycans are attached at residues Asn-282, Asn-552, and Asn-570. Residues 574 to 583 (QELNPKTLSS) show a composition bias toward polar residues. Residues 574–593 (QELNPKTLSSGLDDYPRASH) form a disordered region. Asp-586 functions as the Proton donor in the catalytic mechanism. N-linked (GlcNAc...) asparagine glycans are attached at residues Asn-633, Asn-662, and Asn-730. Glu-819 (proton acceptor) is an active-site residue.

The protein belongs to the glycosyl hydrolase 63 family. Constitutively expressed in roots, stems, leaves, flowers and siliques.

It localises to the endoplasmic reticulum membrane. It carries out the reaction N(4)-(alpha-D-Glc-(1-&gt;2)-alpha-D-Glc-(1-&gt;3)-alpha-D-Glc-(1-&gt;3)-alpha-D-Man-(1-&gt;2)-alpha-D-Man-(1-&gt;2)-alpha-D-Man-(1-&gt;3)-[alpha-D-Man-(1-&gt;2)-alpha-D-Man-(1-&gt;3)-[alpha-D-Man-(1-&gt;2)-alpha-D-Man-(1-&gt;6)]-alpha-D-Man-(1-&gt;6)]-beta-D-Man-(1-&gt;4)-beta-D-GlcNAc-(1-&gt;4)-beta-D-GlcNAc)-L-asparaginyl-[protein] + H2O = N(4)-(alpha-D-Glc-(1-&gt;3)-alpha-D-Glc-(1-&gt;3)-alpha-D-Man-(1-&gt;2)-alpha-D-Man-(1-&gt;2)-alpha-D-Man-(1-&gt;3)-[alpha-D-Man-(1-&gt;2)-alpha-D-Man-(1-&gt;3)-[alpha-D-Man-(1-&gt;2)-alpha-D-Man-(1-&gt;6)]-alpha-D-Man-(1-&gt;6)]-beta-D-Man-(1-&gt;4)-beta-D-GlcNAc-(1-&gt;4)-beta-D-GlcNAc)-L-asparaginyl-[protein] + beta-D-glucose. Its pathway is glycan metabolism; N-glycan degradation. Its function is as follows. Cleaves the distal alpha 1,2-linked glucose residue from the Glc(3)Man(9)GlcNAc(2) oligosaccharide precursor. Required for the accumulation of seed storage proteins, the formation of protein bodies, cell differentiation, cellulose biosynthesis and organization (in cell walls), cell shape determination and organization (e.g. epidermal cells), and embryo development. Involved in root development. This chain is Mannosyl-oligosaccharide glucosidase GCS1 (GCS1), found in Arabidopsis thaliana (Mouse-ear cress).